A 285-amino-acid polypeptide reads, in one-letter code: Inositol oxygenase (285 aa).

Position 29 (Arg-29) interacts with substrate. At Ser-33 the chain carries Phosphoserine. 85–87 (DES) lines the substrate pocket. Residues His-98, His-123, and Asp-124 each coordinate Fe cation. Substrate is bound by residues Lys-127 and 141 to 142 (GD). The Fe cation site is built by His-194, His-220, and Asp-253. Residue 220–221 (HS) coordinates substrate.

The protein belongs to the myo-inositol oxygenase family. Requires Fe cation as cofactor. In terms of tissue distribution, kidney specific.

Its subcellular location is the cytoplasm. It carries out the reaction myo-inositol + O2 = D-glucuronate + H2O + H(+). It participates in polyol metabolism; myo-inositol degradation into D-glucuronate; D-glucuronate from myo-inositol: step 1/1. The protein is Inositol oxygenase (MIOX) of Homo sapiens (Human).